Consider the following 188-residue polypeptide: Translocon-associated protein subunit beta (188 aa).

An N-terminal signal peptide occupies residues 1–15; the sequence is MKFSLFALLFVVVSC. The Lumenal portion of the chain corresponds to 16-151; the sequence is VDVGTQTRDA…EYDRRFAPKY (136 aa). N-linked (GlcNAc...) asparagine glycans are attached at residues Asn93 and Asn109. The helical transmembrane segment at 152-172 threads the bilayer; the sequence is TYFLVFFLIVAPTTLGSFLLF. Residues 173 to 188 are Cytoplasmic-facing; the sequence is QQSKARFPNVIKKKST.

This sequence belongs to the TRAP-beta family. Heterotetramer of TRAP-alpha, TRAP-beta, TRAP-delta and TRAP-gamma.

The protein resides in the endoplasmic reticulum membrane. Functionally, TRAP proteins are part of a complex whose function is to bind calcium to the ER membrane and thereby regulate the retention of ER resident proteins. In Caenorhabditis elegans, this protein is Translocon-associated protein subunit beta.